Reading from the N-terminus, the 507-residue chain is AMP phosphorylase (507 aa).

AMP contacts are provided by residues G168, 194 to 199 (SRAITG), and T203. The active-site Proton donor is the D256. Residues S264 and K288 each coordinate AMP.

The protein belongs to the thymidine/pyrimidine-nucleoside phosphorylase family. Type 2 subfamily.

The catalysed reaction is AMP + phosphate = alpha-D-ribose 1,5-bisphosphate + adenine. The enzyme catalyses CMP + phosphate = cytosine + alpha-D-ribose 1,5-bisphosphate. It catalyses the reaction UMP + phosphate = alpha-D-ribose 1,5-bisphosphate + uracil. Its function is as follows. Catalyzes the conversion of AMP and phosphate to adenine and ribose 1,5-bisphosphate (R15P). Exhibits phosphorylase activity toward CMP and UMP in addition to AMP. Functions in an archaeal AMP degradation pathway, together with R15P isomerase and RubisCO. The chain is AMP phosphorylase from Methanosarcina mazei (strain ATCC BAA-159 / DSM 3647 / Goe1 / Go1 / JCM 11833 / OCM 88) (Methanosarcina frisia).